A 255-amino-acid polypeptide reads, in one-letter code: Type III pantothenate kinase (255 aa).

6 to 13 provides a ligand contact to ATP; that stretch reads DIGNTNTV. Residues Tyr-100 and 107–110 contribute to the substrate site; that span reads GADR. Residue Asp-109 is the Proton acceptor of the active site. Asp-129 is a binding site for K(+). Thr-132 lines the ATP pocket. A substrate-binding site is contributed by Thr-185.

The protein belongs to the type III pantothenate kinase family. In terms of assembly, homodimer. Requires NH4(+) as cofactor. K(+) serves as cofactor.

The protein resides in the cytoplasm. It catalyses the reaction (R)-pantothenate + ATP = (R)-4'-phosphopantothenate + ADP + H(+). It participates in cofactor biosynthesis; coenzyme A biosynthesis; CoA from (R)-pantothenate: step 1/5. Its function is as follows. Catalyzes the phosphorylation of pantothenate (Pan), the first step in CoA biosynthesis. The polypeptide is Type III pantothenate kinase (Desulfosudis oleivorans (strain DSM 6200 / JCM 39069 / Hxd3) (Desulfococcus oleovorans)).